The primary structure comprises 332 residues: Cytoplasmic phosphatidylinositol transfer protein 1 (332 aa).

Residues Ser119, Ser270, and Ser274 each carry the phosphoserine modification. A compositionally biased stretch (low complexity) spans 267–285; that stretch reads SVRSAPSSAPSTPLSTDAP. The interval 267 to 332 is disordered; sequence SVRSAPSSAP…SDKPCRPKSE (66 aa). At Thr278 the chain carries Phosphothreonine. Positions 322–332 are enriched in basic and acidic residues; that stretch reads SSDKPCRPKSE.

It belongs to the PtdIns transfer protein family. PI transfer class IIB subfamily. As to expression, ubiquitously expressed.

It localises to the cytoplasm. The enzyme catalyses a 1,2-diacyl-sn-glycero-3-phospho-(1D-myo-inositol)(in) = a 1,2-diacyl-sn-glycero-3-phospho-(1D-myo-inositol)(out). The catalysed reaction is a 1,2-diacyl-sn-glycero-3-phosphate(in) = a 1,2-diacyl-sn-glycero-3-phosphate(out). In terms of biological role, catalyzes the transfer of phosphatidylinositol (PI) and phosphatidic acid (PA) between membranes. Binds PA derived from the phospholipase D signaling pathway and among the cellular PA species, preferably binds to the C16:0/16:1 and C16:1/18:1 PA species. Its function is as follows. Catalyzes the transfer of phosphatidylinositol between membranes. This is Cytoplasmic phosphatidylinositol transfer protein 1 (PITPNC1) from Homo sapiens (Human).